A 576-amino-acid polypeptide reads, in one-letter code: Urease subunit alpha (576 aa).

Residues 132 to 576 form the Urease domain; it reads GGIDTHIHFI…LPMAQRYFLF (445 aa). Ni(2+) contacts are provided by His137, His139, and Lys220. Lys220 bears the N6-carboxylysine mark. Substrate is bound at residue His222. Ni(2+) contacts are provided by His249 and His275. His323 functions as the Proton donor in the catalytic mechanism. Residue Asp363 participates in Ni(2+) binding.

The protein belongs to the metallo-dependent hydrolases superfamily. Urease alpha subunit family. In terms of assembly, heterotrimer of UreA (gamma), UreB (beta) and UreC (alpha) subunits. Three heterotrimers associate to form the active enzyme. Requires Ni cation as cofactor. In terms of processing, carboxylation allows a single lysine to coordinate two nickel ions.

Its subcellular location is the cytoplasm. The enzyme catalyses urea + 2 H2O + H(+) = hydrogencarbonate + 2 NH4(+). It functions in the pathway nitrogen metabolism; urea degradation; CO(2) and NH(3) from urea (urease route): step 1/1. The protein is Urease subunit alpha of Paenarthrobacter aurescens (strain TC1).